We begin with the raw amino-acid sequence, 341 residues long: MLSGVELSRDEALVLLRSDPANYLSLLAAAARLRSAYFGNSVKLNYLVNLKSGLCPEDCTYCSQRLGSAAQILKYSWLKSEDAIDQAEQGLAGGASRVCFVASGRGPSDRDVDRVAGLVGDFKTRNPQAEVCACLGILKEGQAERLKSCGVDAYNHNLNTSEEKYSEICTTHEFSDRTNTVKAAKAAGLSPCSGLIVGMGESDEELIDALFALRELGSESVPVNFLMPFEGTPLADTWLLTPVKCLQILCVARFVAPRSELRIAGSREMHLRSLQPLALHVANSIFLGDYLTSEGQSAAEDLAMIEDGGFVILDPRASAPQGGVEPVLRKRGAGTELQPNA.

One can recognise a Radical SAM core domain in the interval Asn40 to Ala264. Cys55, Cys59, and Cys62 together coordinate [4Fe-4S] cluster. The [2Fe-2S] cluster site is built by Cys99, Cys132, Cys192, and Arg262. Residues Ala317–Ala341 form a disordered region.

This sequence belongs to the radical SAM superfamily. Biotin synthase family. Homodimer. [4Fe-4S] cluster serves as cofactor. It depends on [2Fe-2S] cluster as a cofactor.

It carries out the reaction (4R,5S)-dethiobiotin + (sulfur carrier)-SH + 2 reduced [2Fe-2S]-[ferredoxin] + 2 S-adenosyl-L-methionine = (sulfur carrier)-H + biotin + 2 5'-deoxyadenosine + 2 L-methionine + 2 oxidized [2Fe-2S]-[ferredoxin]. Its pathway is cofactor biosynthesis; biotin biosynthesis; biotin from 7,8-diaminononanoate: step 2/2. Functionally, catalyzes the conversion of dethiobiotin (DTB) to biotin by the insertion of a sulfur atom into dethiobiotin via a radical-based mechanism. In Renibacterium salmoninarum (strain ATCC 33209 / DSM 20767 / JCM 11484 / NBRC 15589 / NCIMB 2235), this protein is Biotin synthase.